The following is a 621-amino-acid chain: Lethal(3)malignant brain tumor-like protein 4 (621 aa).

The tract at residues 1 to 48 (MRQPNRKRKLSLESTERMNQDRCTGQTEEEKKPGEVTTPSKRESSVTT) is disordered. Basic and acidic residues-rich tracts occupy residues 10 to 20 (LSLESTERMNQ) and 28 to 44 (EEEKKPGEVTTPSKRES). MBT repeat units follow at residues 52 to 152 (WSWE…LHIP), 160 to 260 (FVWM…LVAP), and 269 to 364 (FSWT…LEVP). The segment at 370–414 (VKILPGQPACPTPGCRGIGHIRGPRYAGHHSAFGCPYSDVNLKRE) adopts a CCHHC-type zinc-finger fold. Zn(2+) is bound by residues cysteine 379, cysteine 384, histidine 398, and cysteine 404. Residues 543-607 (WTVDEVAEFV…YNSILMFRNS (65 aa)) enclose the SAM domain.

The protein resides in the nucleus. Its function is as follows. Putative Polycomb group (PcG) protein. PcG proteins maintain the transcriptionally repressive state of genes, probably via a modification of chromatin, rendering it heritably changed in its expressibility. The sequence is that of Lethal(3)malignant brain tumor-like protein 4 (L3mbtl4) from Mus musculus (Mouse).